Here is a 95-residue protein sequence, read N- to C-terminus: Protein RALF-like 16 (95 aa).

The N-terminal stretch at 1 to 29 (MVAYEKSPIVFLFATMMLVMFLFCGSGEA) is a signal peptide. 2 disulfide bridges follow: C45-C53 and C65-C71.

Belongs to the plant rapid alkalinization factor (RALF) family.

The protein resides in the secreted. Its function is as follows. Cell signaling peptide that may regulate plant stress, growth, and development. Mediates a rapid alkalinization of extracellular space by mediating a transient increase in the cytoplasmic Ca(2+) concentration leading to a calcium-dependent signaling events through a cell surface receptor and a concomitant activation of some intracellular mitogen-activated protein kinases. This is Protein RALF-like 16 (RALFL16) from Arabidopsis thaliana (Mouse-ear cress).